We begin with the raw amino-acid sequence, 447 residues long: M-phase inducer phosphatase 3 (447 aa).

S2 bears the N-acetylserine mark. Phosphoserine occurs at positions 20, 38, 56, 60, and 63. Phosphothreonine; by CDK1 is present on T66. Over residues M81–A90 the composition is skewed to polar residues. The interval M81–T109 is disordered. Residue S128 is modified to Phosphoserine. T129 is modified (phosphothreonine). Residue S192 is modified to Phosphoserine; by CDK1. Phosphoserine; by PLK3 is present on residues S213 and S220. Positions V294–D401 constitute a Rhodanese domain. Residue C350 is part of the active site. S445 is subject to Phosphoserine.

This sequence belongs to the MPI phosphatase family. In terms of assembly, interacts with MAPK14 and 14-3-3 proteins. When phosphorylated on Ser-128 and/or Thr-129, interacts with PLK1. Interacts with MARK3/C-TAK1. Phosphorylated by PLK4. Phosphorylated by PLK1, leading to activate the phosphatase activity. Phosphorylated by CHEK1 and MAPKAPK2. This phosphorylation creates a binding site for 14-3-3 protein and inhibits the phosphatase activity. Phosphorylation by PLK3 at Ser-213 promotes nuclear translocation. Ser-220 is a minor phosphorylation site. Phosphorylation by CDK1 occurs at G2 and G2-M transition and leads to increased activity. As to expression, spleen and thymus.

Its subcellular location is the nucleus. The catalysed reaction is O-phospho-L-tyrosyl-[protein] + H2O = L-tyrosyl-[protein] + phosphate. In terms of biological role, functions as a dosage-dependent inducer in mitotic control. Tyrosine protein phosphatase required for progression of the cell cycle. When phosphorylated, highly effective in activating G2 cells into prophase. Directly dephosphorylates CDK1 and activates its kinase activity. In Mus musculus (Mouse), this protein is M-phase inducer phosphatase 3 (Cdc25c).